Consider the following 307-residue polypeptide: Glutathione synthetase (307 aa).

The ATP-grasp domain occupies 120–304 (KLGALRFSRW…LADQTIERLR (185 aa)). 146-202 (AREQGDVVLKPLGGRAGLGVIRVQAEAPGLKALLELVTEQERLPVMAQRFLPDVTEG) lines the ATP pocket. 2 residues coordinate Mg(2+): E275 and N277.

The protein belongs to the prokaryotic GSH synthase family. It depends on Mg(2+) as a cofactor. Mn(2+) serves as cofactor.

It catalyses the reaction gamma-L-glutamyl-L-cysteine + glycine + ATP = glutathione + ADP + phosphate + H(+). Its pathway is sulfur metabolism; glutathione biosynthesis; glutathione from L-cysteine and L-glutamate: step 2/2. This is Glutathione synthetase from Parasynechococcus marenigrum (strain WH8102).